The sequence spans 134 residues: TSC22 domain family protein 3 (134 aa).

The interval 1–60 (MNTEMYQTPMEVAVYQLHNFSISFFSSLLGGDVVSVKLDNSASGASVVALDNKIEQAMDL) is AP1-binding. The tract at residues 76 to 97 (LKEQIRELVEKNSQLERENTLL) is leucine-zipper. Positions 101–134 (ASPEQLEKFQSRLSPEEPAPEAPETPEAPGGSAV) are disordered. Ser-102 carries the post-translational modification Phosphoserine. Position 125 is a phosphothreonine (Thr-125). Positions 125–134 (TPEAPGGSAV) are enriched in low complexity.

It belongs to the TSC-22/Dip/Bun family. Can form homodimers, however it is likely to function as a monomer. Interacts with NFKB1. Interacts (via N-terminus) with JUN and FOS; these interactions inhibit the binding of active AP1 to its target DNA. Interacts with MYOD1. Interacts with HDAC1; this interaction affects HDAC1 activity on MYOG promoter and thus inhibits MYOD1 transcriptional activity.

Its subcellular location is the cytoplasm. It is found in the nucleus. Its function is as follows. Protects T-cells from IL2 deprivation-induced apoptosis through the inhibition of FOXO3A transcriptional activity that leads to the down-regulation of the pro-apoptotic factor BCL2L11. In macrophages, plays a role in the anti-inflammatory and immunosuppressive effects of glucocorticoids and IL10. In T-cells, inhibits anti-CD3-induced NFKB1 nuclear translocation and thereby NFKB1 DNA-binding activities. In vitro, suppresses AP-1 transcription factor complex DNA-binding activities. This chain is TSC22 domain family protein 3 (Tsc22d3), found in Rattus norvegicus (Rat).